The chain runs to 530 residues: Pyridoxine/pyridoxamine 5'-phosphate oxidase 1, chloroplastic (530 aa).

The transit peptide at Met1 to Asn64 directs the protein to the chloroplast. Met65 is modified (N-acetylmethionine). Residues Ala81–Leu297 enclose the YjeF N-terminal domain. A (6S)-NADPHX-binding site is contributed by Asn131 to Asp135. K(+) is bound by residues Asn132 and Asp196. (6S)-NADPHX contacts are provided by residues Gly200–Ala206 and Asp238. Position 241 (Ser241) interacts with K(+). Glu247 to His250 provides a ligand contact to pyridoxal 5'-phosphate. A substrate-binding site is contributed by Arg321–Tyr324. Residue Val325–Pro327 coordinates pyridoxal 5'-phosphate. Arg374–Leu377 lines the FMN pocket. Lys379 lines the pyridoxal 5'-phosphate pocket. FMN contacts are provided by residues Phe389–Thr390, Lys395–Lys396, and Gln418. Tyr436, Arg440, and Ser444 together coordinate pyridoxal 5'-phosphate. FMN contacts are provided by residues Gln453 to Ser454 and Trp499. Residue Arg505 to His507 participates in pyridoxal 5'-phosphate binding. Arg509 lines the FMN pocket.

This sequence in the N-terminal section; belongs to the NnrE/AIBP family. It in the C-terminal section; belongs to the pyridoxamine 5'-phosphate oxidase family. Homodimer. Requires FMN as cofactor. K(+) serves as cofactor. In terms of tissue distribution, expressed in leaves, stems, flowers and roots.

It is found in the plastid. Its subcellular location is the chloroplast. The catalysed reaction is pyridoxamine 5'-phosphate + O2 + H2O = pyridoxal 5'-phosphate + H2O2 + NH4(+). It catalyses the reaction pyridoxine 5'-phosphate + O2 = pyridoxal 5'-phosphate + H2O2. It carries out the reaction (6R)-NADHX = (6S)-NADHX. The enzyme catalyses (6R)-NADPHX = (6S)-NADPHX. The protein operates within cofactor metabolism; pyridoxal 5'-phosphate salvage; pyridoxal 5'-phosphate from pyridoxamine 5'-phosphate: step 1/1. It participates in cofactor metabolism; pyridoxal 5'-phosphate salvage; pyridoxal 5'-phosphate from pyridoxine 5'-phosphate: step 1/1. Its function is as follows. Catalyzes the oxidation of either pyridoxine 5'-phosphate (PNP) or pyridoxamine 5'-phosphate (PMP) into pyridoxal 5'-phosphate (PLP). Involved in the PLP salvage pathway. Has a higher preference for PNP over PMP. May also catalyze the epimerization of the S- and R-forms of NAD(P)HX, a damaged form of NAD(P)H that is a result of enzymatic or heat-dependent hydration. This is a prerequisite for the S-specific NAD(P)H-hydrate dehydratase to allow the repair of both epimers of NAD(P)HX. In Arabidopsis thaliana (Mouse-ear cress), this protein is Pyridoxine/pyridoxamine 5'-phosphate oxidase 1, chloroplastic (PPOX1).